The sequence spans 785 residues: Transcription factor Sp1 (785 aa).

The segment at Met-1–Leu-93 is disordered. The residue at position 2 (Ser-2) is an N-acetylserine. Phosphoserine is present on residues Ser-2 and Ser-7. Residues Ser-2–Gln-82 form a repressor domain region. Lys-16 is covalently cross-linked (Glycyl lysine isopeptide (Lys-Gly) (interchain with G-Cter in SUMO); alternate). Lys-16 participates in a covalent cross-link: Glycyl lysine isopeptide (Lys-Gly) (interchain with G-Cter in SUMO2); alternate. The span at Gly-20–Ala-34 shows a compositional bias: gly residues. Ser-59 bears the Phosphoserine mark. The segment covering Glu-72–Ser-85 has biased composition (low complexity). Position 101 is a phosphoserine; by ATM (Ser-101). Residues Ile-109 to Gln-123 are compositionally biased toward polar residues. Residues Ile-109 to Thr-141 are disordered. The segment covering Ser-124–Ser-136 has biased composition (low complexity). A transactivation domain A (Gln-rich) region spans residues Gln-146–Gln-251. The transactivation domain B (Gln-rich) stretch occupies residues Asn-261 to Thr-495. Position 278 is a phosphothreonine; by MAPK8 (Thr-278). The tract at residues Thr-329–Gln-395 is disordered. Over residues Thr-342–Gln-357 the composition is skewed to low complexity. Residues Arg-358–Ser-379 show a composition bias toward polar residues. Residues Gln-381–Gln-395 show a composition bias toward low complexity. At Thr-453 the chain carries Phosphothreonine; by MAPK1 and MAPK3. Residues Val-462–Gln-470 carry the 9aaTAD motif. The O-linked (GlcNAc) serine glycan is linked to Ser-491. Positions Ser-496–Lys-610 are transactivation domain C (highly charged). The tract at residues Leu-567–Arg-598 is disordered. Ser-612 is subject to Phosphoserine; alternate. Ser-612 is a glycosylation site (O-linked (GlcNAc) serine; alternate). Positions Asp-619–Phe-785 are VZV IE62-binding. Residues His-626–His-650 form a C2H2-type 1 zinc finger. Thr-640 carries the phosphothreonine; alternate modification. O-linked (GlcNAc) threonine; alternate glycosylation occurs at Thr-640. Ser-641 carries an O-linked (GlcNAc) serine; alternate glycan. Ser-641 carries the post-translational modification Phosphoserine; by PKC/PRKCZ; alternate. The residue at position 651 (Thr-651) is a Phosphothreonine; by PKC/PRKCZ. The C2H2-type 2 zinc finger occupies Phe-656–His-680. Position 668 is a phosphothreonine (Thr-668). Position 670 is a phosphoserine; by PKC/PRKCZ (Ser-670). Thr-681 carries the post-translational modification Phosphothreonine; by PKC/PRKCZ. The C2H2-type 3 zinc-finger motif lies at Phe-686–His-708. Ser-698 and Ser-702 each carry phosphoserine; alternate. O-linked (GlcNAc) serine; alternate glycans are attached at residues Ser-698 and Ser-702. At Lys-703 the chain carries N6-acetyllysine. Residues His-708–Phe-785 form a domain D region. Phosphothreonine; by MAPK1, MAPK3 and MAPK8 is present on Thr-739.

Belongs to the Sp1 C2H2-type zinc-finger protein family. As to quaternary structure, interacts with ATF7IP, ATF7IP2, BAHD1, POGZ, HCFC1, AATF and PHC2. Interacts with HLTF; the interaction may be required for basal transcriptional activity of HLTF. Interacts (deacetylated form) with EP300; the interaction enhances gene expression. Interacts with HDAC1 and JUN. Interacts with ELF1; the interaction is inhibited by glycosylation of SP1. Interaction with NFYA; the interaction is inhibited by glycosylation of SP1. Interacts with ATF7IP and TBP. Interacts with MEIS2 isoform 4 and PBX1 isoform PBX1a. Interacts with EGR1. Interacts with SMARCA4/BRG1. Interacts with RNF112 in an oxidative stress-regulated manner. Interacts with ZBTB7A; ZBTB7A prevents the binding to GC-rich motifs in promoters and represses the transcriptional activity of SP1. Interacts with DDX3X; this interaction potentiates SP1-induced CDKN1A/WAF1/CIP1 transcription. Interacts with MSX1; the interaction may inhibit MSX1 autoinactivation. (Microbial infection) Interacts with varicella-zoster virus IE62 protein. In terms of assembly, (Microbial infection) Interacts with SV40 VP2/3 proteins. Interacts with SV40 major capsid protein VP1; this interaction leads to a cooperativity between the 2 proteins in DNA binding. As to quaternary structure, (Microbial infection) Interacts with HIV-1 Vpr; the interaction is inhibited by SP1 O-glycosylation. Post-translationally, phosphorylated on multiple serine and threonine residues. Phosphorylation is coupled to ubiquitination, sumoylation and proteolytic processing. Phosphorylation on Ser-59 enhances proteolytic cleavage. Phosphorylation on Ser-7 enhances ubiquitination and protein degradation. Hyperphosphorylation on Ser-101 in response to DNA damage has no effect on transcriptional activity. MAPK1/MAPK3-mediated phosphorylation on Thr-453 and Thr-739 enhances VEGF transcription but, represses FGF2-triggered PDGFR-alpha transcription. Also implicated in the repression of RECK by ERBB2. Hyperphosphorylated on Thr-278 and Thr-739 during mitosis by MAPK8 shielding SP1 from degradation by the ubiquitin-dependent pathway. Phosphorylated in the zinc-finger domain by calmodulin-activated PKCzeta. Phosphorylation on Ser-641 by PKCzeta is critical for TSA-activated LHR gene expression through release of its repressor, p107. Phosphorylation on Thr-668, Ser-670 and Thr-681 is stimulated by angiotensin II via the AT1 receptor inducing increased binding to the PDGF-D promoter. This phosphorylation is increased in injured artey wall. Ser-59 and Thr-681 can both be dephosphorylated by PP2A during cell-cycle interphase. Dephosphorylation on Ser-59 leads to increased chromatin association during interphase and increases the transcriptional activity. On insulin stimulation, sequentially glycosylated and phosphorylated on several C-terminal serine and threonine residues. In terms of processing, acetylated. Acetylation/deacetylation events affect transcriptional activity. Deacetylation leads to an increase in the expression of the 12(s)-lipooxygenase gene through recruitment of p300 to the promoter. Deacetylated by HDAC6 which leads to increased expression of ENG and positive regulation of angiogenesis. Ubiquitinated. Ubiquitination occurs on the C-terminal proteolytically-cleaved peptide and is triggered by phosphorylation. Post-translationally, sumoylated with SUMO1. Sumoylation modulates proteolytic cleavage of the N-terminal repressor domain. Sumoylation levels are attenuated during tumorigenesis. Phosphorylation mediates SP1 desumoylation. In terms of processing, proteolytic cleavage in the N-terminal repressor domain is prevented by sumoylation. The C-terminal cleaved product is susceptible to degradation. O-glycosylated; Contains 8 N-acetylglucosamine side chains. Levels are controlled by insulin and the SP1 phosphorylation states. Insulin-mediated O-glycosylation locates SP1 to the nucleus, where it is sequentially deglycosylated and phosphorylated. O-glycosylation affects transcriptional activity through disrupting the interaction with a number of transcription factors including ELF1 and NFYA. Also inhibits interaction with the HIV1 promoter. Inhibited by peroxisomome proliferator receptor gamma (PPARgamma). In terms of tissue distribution, up-regulated in adenocarcinomas of the stomach (at protein level). Isoform 3 is ubiquitously expressed at low levels.

The protein localises to the nucleus. Its subcellular location is the cytoplasm. Transcription factor that can activate or repress transcription in response to physiological and pathological stimuli. Binds with high affinity to GC-rich motifs and regulates the expression of a large number of genes involved in a variety of processes such as cell growth, apoptosis, differentiation and immune responses. Highly regulated by post-translational modifications (phosphorylations, sumoylation, proteolytic cleavage, glycosylation and acetylation). Also binds the PDGFR-alpha G-box promoter. May have a role in modulating the cellular response to DNA damage. Implicated in chromatin remodeling. Plays an essential role in the regulation of FE65 gene expression. In complex with ATF7IP, maintains telomerase activity in cancer cells by inducing TERT and TERC gene expression. Isoform 3 is a stronger activator of transcription than isoform 1. Positively regulates the transcription of the core clock component BMAL1. Plays a role in the recruitment of SMARCA4/BRG1 on the c-FOS promoter. Plays a role in protecting cells against oxidative stress following brain injury by regulating the expression of RNF112. The protein is Transcription factor Sp1 (SP1) of Homo sapiens (Human).